Consider the following 331-residue polypeptide: Quinone oxidoreductase (331 aa).

A2 is subject to N-acetylalanine. An N6-acetyllysine modification is found at K23. The residue at position 35 (S35) is a Phosphoserine. Residues Y53, S158–V161, and G181 contribute to the NADP(+) site. K186 bears the N6-acetyllysine mark. Residues H200, N231, V248–R251, and V271–L273 each bind NADP(+). K298 is modified (N6-succinyllysine).

The protein belongs to the zinc-containing alcohol dehydrogenase family. Quinone oxidoreductase subfamily. In terms of assembly, homotetramer.

Its subcellular location is the cytoplasm. It catalyses the reaction 2 a quinone + NADPH + H(+) = 2 a 1,4-benzosemiquinone + NADP(+). Does not have alcohol dehydrogenase activity. Binds NADP and acts through a one-electron transfer process. Orthoquinones, such as 1,2-naphthoquinone or 9,10-phenanthrenequinone, are the best substrates (in vitro). May act in the detoxification of xenobiotics. Interacts with (AU)-rich elements (ARE) in the 3'-UTR of target mRNA species and enhances their stability. NADPH binding interferes with mRNA binding. The protein is Quinone oxidoreductase (Cryz) of Mus musculus (Mouse).